Reading from the N-terminus, the 204-residue chain is Translation initiation factor 2 subunit beta (204 aa).

Residues 146 to 204 (AIEEGKELEVHIESISKKGDGVARIGKYILYVAGTKAGQNVKVRITRISGQVAFTQKIL) form the TRAM domain.

This sequence belongs to the eIF-2-beta/eIF-5 family. In terms of assembly, heterotrimer composed of an alpha, a beta and a gamma chain.

EIF-2 functions in the early steps of protein synthesis by forming a ternary complex with GTP and initiator tRNA. This chain is Translation initiation factor 2 subunit beta, found in Methanocorpusculum labreanum (strain ATCC 43576 / DSM 4855 / Z).